Here is a 660-residue protein sequence, read N- to C-terminus: Solute carrier family 5 member 4 (660 aa).

The Cytoplasmic segment spans residues 1-28; it reads MASTLSPSTVTKTPGPPEISERIQNAAD. The chain crosses the membrane as a helical span at residues 29-47; sequence ISVIVIYFVVVMAVGLWAM. The Extracellular segment spans residues 48–64; it reads LRTNRGTVGGFFLAGRD. Residues 65 to 85 traverse the membrane as a helical segment; the sequence is VTWWPMGASLFASNIGSGHFV. Over 86–105 the chain is Cytoplasmic; sequence GLAGTGAASGIAIAAFEWNA. The helical transmembrane segment at 106-126 threads the bilayer; the sequence is LLLLLVLGWFFVPIYIKAGVM. The Extracellular segment spans residues 127 to 171; the sequence is TMPEYLRKRFGGKRLQIYLSILSLFICVALRISSDIFSGAIFIKL. A helical membrane pass occupies residues 172–191; it reads ALGLDLYLAIFSLLAITAIY. Over 192 to 208 the chain is Cytoplasmic; that stretch reads TITGGLASVIYTDTLQT. The chain crosses the membrane as a helical span at residues 209–229; sequence IIMLIGSFILMGFAFVEVGGY. At 230–270 the chain is on the extracellular side; it reads ESFTEKYMNAIPTIVEGDNLTISPKCYTPQGDSFHIFRDAV. Asparagine 248 carries an N-linked (GlcNAc...) asparagine glycan. Residues 271–291 traverse the membrane as a helical segment; sequence TGDIPWPGMIFGMTVVAAWYW. Residues 292-314 lie on the Cytoplasmic side of the membrane; it reads CTDQVIVQRCLSGKDMSHVKAAC. A helical transmembrane segment spans residues 315–334; sequence IMCGYLKLLPMFLMVMPGMI. Residues 335-423 are Extracellular-facing; sequence SRILYTEKVA…RKQASEKELL (89 aa). A helical transmembrane segment spans residues 424-443; that stretch reads IAGRLFIILLIVISIVWVPL. Topologically, residues 444–455 are cytoplasmic; sequence VQVAQNGQLFHY. The chain crosses the membrane as a helical span at residues 456–476; the sequence is IESISSYLGPPIAAVFLLAIF. Residues 477–526 are Extracellular-facing; that stretch reads CKRVNEQGAFWGLIIGFVMGLIRMIAEFVYGTGSCLAASNCPQIICGVHY. Residues 527–547 form a helical membrane-spanning segment; it reads LYFALILFFVSILVVLAISLL. The Cytoplasmic segment spans residues 548-638; the sequence is TKPIPDVHLY…TDTSEKPLWK (91 aa). A helical membrane pass occupies residues 639–659; sequence TIVNINAILLLAVAVFVHGYF.

It belongs to the sodium:solute symporter (SSF) (TC 2.A.21) family. In terms of tissue distribution, kidney, intestine, liver, skeletal muscle and spleen.

The protein resides in the cell membrane. The enzyme catalyses D-glucose(out) + 2 Na(+)(out) = D-glucose(in) + 2 Na(+)(in). Its activity is regulated as follows. Inhibited by phlorizin. In terms of biological role, low-affinity sodium/D-glucose symporter with a great selectivity for sugars (D-glucose &gt;&gt; D-galactose). Na(+) and D-glucose transport are tightly coupled at neutral pH, but at acidic pH, ion transport is uncoupled from sugar transport. The chain is Solute carrier family 5 member 4 from Sus scrofa (Pig).